The chain runs to 609 residues: UvrABC system protein C (609 aa).

A GIY-YIG domain is found at 15–92 (TGSGVYQMQD…IKQFRPRYNV (78 aa)). The region spanning 202-237 (DQVIIKLTERMEVASENLVFEEAAHYRDQIRQLRRL) is the UVR domain.

The protein belongs to the UvrC family. Interacts with UvrB in an incision complex.

Its subcellular location is the cytoplasm. Functionally, the UvrABC repair system catalyzes the recognition and processing of DNA lesions. UvrC both incises the 5' and 3' sides of the lesion. The N-terminal half is responsible for the 3' incision and the C-terminal half is responsible for the 5' incision. The polypeptide is UvrABC system protein C (Coxiella burnetii (strain CbuK_Q154) (Coxiella burnetii (strain Q154))).